The primary structure comprises 346 residues: Phosphoribosylformylglycinamidine cyclo-ligase (346 aa).

The protein belongs to the AIR synthase family.

Its subcellular location is the cytoplasm. It carries out the reaction 2-formamido-N(1)-(5-O-phospho-beta-D-ribosyl)acetamidine + ATP = 5-amino-1-(5-phospho-beta-D-ribosyl)imidazole + ADP + phosphate + H(+). It functions in the pathway purine metabolism; IMP biosynthesis via de novo pathway; 5-amino-1-(5-phospho-D-ribosyl)imidazole from N(2)-formyl-N(1)-(5-phospho-D-ribosyl)glycinamide: step 2/2. The protein is Phosphoribosylformylglycinamidine cyclo-ligase of Vibrio parahaemolyticus serotype O3:K6 (strain RIMD 2210633).